Here is a 789-residue protein sequence, read N- to C-terminus: uncharacterized protein (789 aa).

5 disordered regions span residues 107–326 (YQQD…NNNN), 426–491 (MLKS…NNNN), 523–625 (SVNF…ISNN), 666–751 (THTF…KGNN), and 765–789 (PTRFNNKNNNNSNGFTSNKRFYNQH). Positions 113-123 (NNTDDEQEQEQ) are enriched in acidic residues. Low complexity-rich tracts occupy residues 124-141 (EQQQKQNEIINKITTPIK), 151-194 (TSQT…ITPI), 201-213 (SISTSSSKQLRSS), and 225-270 (TSST…THNS). The span at 274 to 290 (IDDDDGDNNDEINDEND) shows a compositional bias: acidic residues. Composition is skewed to low complexity over residues 291 to 326 (INSNNLTFSSSTKSKKINNNNNSIDSNNTNINNNNN) and 429 to 491 (SNNS…NNNN). Positions 523-549 (SVNFDRNQNQKSPFLNNTSMPNINFNE) are enriched in polar residues. 4 stretches are compositionally biased toward low complexity: residues 550-581 (QSQQQSQNQYYQQQQQQQQQQSNNSMNQSINY), 602-617 (TSGSSLKYSTSSNNSK), 696-722 (HIMNSMNSNFNHHHNNNNQLFNNSGSN), and 766-789 (TRFNNKNNNNSNGFTSNKRFYNQH).

This is an uncharacterized protein from Dictyostelium discoideum (Social amoeba).